The sequence spans 81 residues: Dermaseptin-S6 (81 aa).

Positions 1–22 (MDILKKSLFFILFLGLVSLSIS) are cleaved as a signal peptide. A disordered region spans residues 22–49 (SEEEKRENEDEEDQEDDEQSEEKRGLWS). A propeptide spanning residues 23-45 (EEEKRENEDEEDQEDDEQSEEKR) is cleaved from the precursor. Residues 30 to 41 (EDEEDQEDDEQS) show a composition bias toward acidic residues. Isoleucine amide is present on I78. A propeptide spanning residues 80–81 (EQ) is cleaved from the precursor.

Belongs to the frog skin active peptide (FSAP) family. Dermaseptin subfamily. As to expression, expressed by the skin glands.

Its subcellular location is the secreted. In terms of biological role, antimicrobial peptide. The sequence is that of Dermaseptin-S6 from Phyllomedusa sauvagei (Sauvage's leaf frog).